Consider the following 346-residue polypeptide: Biotin synthase (346 aa).

The region spanning 38 to 256 (KQIQVSTLLS…IAVARIMMPT (219 aa)) is the Radical SAM core domain. [4Fe-4S] cluster is bound by residues Cys-53, Cys-57, and Cys-60. Residues Cys-97, Cys-128, Cys-188, and Arg-260 each coordinate [2Fe-2S] cluster.

It belongs to the radical SAM superfamily. Biotin synthase family. Homodimer. It depends on [4Fe-4S] cluster as a cofactor. Requires [2Fe-2S] cluster as cofactor.

The enzyme catalyses (4R,5S)-dethiobiotin + (sulfur carrier)-SH + 2 reduced [2Fe-2S]-[ferredoxin] + 2 S-adenosyl-L-methionine = (sulfur carrier)-H + biotin + 2 5'-deoxyadenosine + 2 L-methionine + 2 oxidized [2Fe-2S]-[ferredoxin]. Its pathway is cofactor biosynthesis; biotin biosynthesis; biotin from 7,8-diaminononanoate: step 2/2. Its function is as follows. Catalyzes the conversion of dethiobiotin (DTB) to biotin by the insertion of a sulfur atom into dethiobiotin via a radical-based mechanism. This is Biotin synthase from Salmonella arizonae (strain ATCC BAA-731 / CDC346-86 / RSK2980).